Reading from the N-terminus, the 402-residue chain is tRNA pseudouridine synthase Pus10 (402 aa).

The active-site Nucleophile is the D215. Positions E370–T402 are disordered. Residues G380–P389 are compositionally biased toward basic residues.

This sequence belongs to the pseudouridine synthase Pus10 family.

The catalysed reaction is uridine(54) in tRNA = pseudouridine(54) in tRNA. It carries out the reaction uridine(55) in tRNA = pseudouridine(55) in tRNA. Its function is as follows. Responsible for synthesis of pseudouridine from uracil-54 and uracil-55 in the psi GC loop of transfer RNAs. This is tRNA pseudouridine synthase Pus10 from Cenarchaeum symbiosum (strain A).